A 277-amino-acid polypeptide reads, in one-letter code: Shikimate dehydrogenase (NADP(+)) (277 aa).

Shikimate contacts are provided by residues 15 to 17 and Thr62; that span reads SLS. The Proton acceptor role is filled by Lys66. Residues Asn87 and Asp102 each coordinate shikimate. Residues 127–131, 151–156, and Ile219 each bind NADP(+); these read GAGGA and NRTVDK. Tyr221 contacts shikimate. Residue Gly242 participates in NADP(+) binding.

The protein belongs to the shikimate dehydrogenase family. As to quaternary structure, homodimer.

It carries out the reaction shikimate + NADP(+) = 3-dehydroshikimate + NADPH + H(+). It participates in metabolic intermediate biosynthesis; chorismate biosynthesis; chorismate from D-erythrose 4-phosphate and phosphoenolpyruvate: step 4/7. Functionally, involved in the biosynthesis of the chorismate, which leads to the biosynthesis of aromatic amino acids. Catalyzes the reversible NADPH linked reduction of 3-dehydroshikimate (DHSA) to yield shikimate (SA). The polypeptide is Shikimate dehydrogenase (NADP(+)) (Bacillus cereus (strain ATCC 10987 / NRS 248)).